A 485-amino-acid polypeptide reads, in one-letter code: Glutamyl-tRNA(Gln) amidotransferase subunit A (485 aa).

Catalysis depends on charge relay system residues lysine 79 and serine 154. Serine 178 functions as the Acyl-ester intermediate in the catalytic mechanism.

This sequence belongs to the amidase family. GatA subfamily. In terms of assembly, heterotrimer of A, B and C subunits.

It catalyses the reaction L-glutamyl-tRNA(Gln) + L-glutamine + ATP + H2O = L-glutaminyl-tRNA(Gln) + L-glutamate + ADP + phosphate + H(+). Its function is as follows. Allows the formation of correctly charged Gln-tRNA(Gln) through the transamidation of misacylated Glu-tRNA(Gln) in organisms which lack glutaminyl-tRNA synthetase. The reaction takes place in the presence of glutamine and ATP through an activated gamma-phospho-Glu-tRNA(Gln). The polypeptide is Glutamyl-tRNA(Gln) amidotransferase subunit A (Bacillus licheniformis (strain ATCC 14580 / DSM 13 / JCM 2505 / CCUG 7422 / NBRC 12200 / NCIMB 9375 / NCTC 10341 / NRRL NRS-1264 / Gibson 46)).